Here is a 568-residue protein sequence, read N- to C-terminus: Potassium-transporting ATPase potassium-binding subunit (568 aa).

10 helical membrane-spanning segments follow: residues 7 to 27 (AEIA…GLFL), 65 to 85 (SYAL…YAIL), 135 to 155 (AGLT…AAAV), 177 to 197 (VSLY…VALG), 254 to 274 (LTNL…VVAF), 286 to 306 (ALIT…YWTE), 383 to 403 (GLYG…LMVG), 422 to 442 (MLAV…AAVL), 489 to 509 (LGIA…AIAG), and 530 to 550 (LFIG…FFPA).

The protein belongs to the KdpA family. As to quaternary structure, the system is composed of three essential subunits: KdpA, KdpB and KdpC.

The protein resides in the cell inner membrane. Part of the high-affinity ATP-driven potassium transport (or Kdp) system, which catalyzes the hydrolysis of ATP coupled with the electrogenic transport of potassium into the cytoplasm. This subunit binds the periplasmic potassium ions and delivers the ions to the membrane domain of KdpB through an intramembrane tunnel. This Beijerinckia indica subsp. indica (strain ATCC 9039 / DSM 1715 / NCIMB 8712) protein is Potassium-transporting ATPase potassium-binding subunit.